The sequence spans 397 residues: Probable sugar efflux transporter (397 aa).

The next 12 membrane-spanning stretches (helical) occupy residues 15 to 35 (VVTL…PVGL), 50 to 70 (VGIM…PFML), 81 to 101 (LICL…AWNF), 103 to 123 (VLVI…SITA), 136 to 156 (AQAL…GLPI), 169 to 189 (TFFA…KLLP), 209 to 229 (PALM…YTAY), 246 to 266 (FATV…VVFG), 275 to 295 (PLIS…LPAA), 301 to 321 (LAVL…GMQV), 333 to 353 (VAMA…ALVG), and 364 to 384 (TIGY…IIIF).

The protein belongs to the major facilitator superfamily. SotB (TC 2.A.1.2) family.

Its subcellular location is the cell inner membrane. Functionally, involved in the efflux of sugars. The physiological role may be the reduction of the intracellular concentration of toxic sugars or sugar metabolites. The sequence is that of Probable sugar efflux transporter from Citrobacter koseri (strain ATCC BAA-895 / CDC 4225-83 / SGSC4696).